The primary structure comprises 159 residues: UPF0260 protein Avi_1324 (159 aa).

Belongs to the UPF0260 family.

The chain is UPF0260 protein Avi_1324 from Allorhizobium ampelinum (strain ATCC BAA-846 / DSM 112012 / S4) (Agrobacterium vitis (strain S4)).